The primary structure comprises 598 residues: Protein VASCULAR ASSOCIATED DEATH 1, chloroplastic (598 aa).

The span at 1–11 (MAMLSTASVSG) shows a compositional bias: polar residues. Positions 1–64 (MAMLSTASVS…PSRGGDNQSE (64 aa)) are disordered. The N-terminal 68 residues, 1-68 (MAMLSTASVS…GDNQSEVISK (68 aa)), are a transit peptide targeting the chloroplast. N-linked (GlcNAc...) asparagine glycosylation occurs at Asn61. Residues 70 to 134 (EEYRQLFRLP…PFAEISCVKR (65 aa)) form the GRAM domain. A VASt domain is found at 272-444 (DFTKVAEAKF…MAHELLKQKK (173 aa)). Residues Asn329 and Asn494 are each glycosylated (N-linked (GlcNAc...) asparagine). The chain crosses the membrane as a helical span at residues 507–527 (QVIVLAFAVILLMQVTIVVLL). A coiled-coil region spans residues 553-595 (WLEKRMHFLREEMMMVEDRLQRMRQDHAALKAQFHHLERLLRR).

It is found in the membrane. Its subcellular location is the plastid. It localises to the chloroplast. Its function is as follows. Involved in ethylene- and salicylic acid-dependent cell death control associated with cells in the vicinity of vascular bundles. This is Protein VASCULAR ASSOCIATED DEATH 1, chloroplastic from Arabidopsis thaliana (Mouse-ear cress).